Reading from the N-terminus, the 372-residue chain is MEYGLDLEYSFNEFLKGFGLSSEIAHIIWLPLPMLLVLVAAVVGVLVTVWLERKISAAAQQRIGPEYAGALGVLQPIADGLKLLVKEDIIPAKADGILFTAGPILVLVPVILSWLIVPFGQNLLISNVGIGIFLWIALSSIQPIGLLMSGYASNNKYSLLGGLRAAAQSISYEIPLALSVLAIVLMTNSLSTIDIVNQQSGAGILSWNIWRQPVGFIVFWICALAECERLPFDLPEAEEELVAGYQTEYAGMKFALFYLGSYINLILSALLVSILYLGGWGFPIPVELIAKFLNLPINAPLIQVFTASIGIVMTVLKAYLLVFIAILLRWTTPRVRIDQLLDLGWKFLLPISLANLLITAGLKLAFPQFFGG.

8 helical membrane-spanning segments follow: residues 27–47 (IIWL…GVLV), 97–117 (ILFT…WLIV), 128–148 (VGIG…GLLM), 176–196 (LALS…IDIV), 204–224 (ILSW…ICAL), 266–286 (ILSA…PIPV), 308–328 (SIGI…AILL), and 347–367 (FLLP…LAFP).

The protein belongs to the complex I subunit 1 family. As to quaternary structure, NDH-1 is composed of at least 11 different subunits.

Its subcellular location is the cellular thylakoid membrane. The catalysed reaction is a plastoquinone + NADH + (n+1) H(+)(in) = a plastoquinol + NAD(+) + n H(+)(out). It catalyses the reaction a plastoquinone + NADPH + (n+1) H(+)(in) = a plastoquinol + NADP(+) + n H(+)(out). NDH-1 shuttles electrons from an unknown electron donor, via FMN and iron-sulfur (Fe-S) centers, to quinones in the respiratory and/or the photosynthetic chain. The immediate electron acceptor for the enzyme in this species is believed to be plastoquinone. Couples the redox reaction to proton translocation, and thus conserves the redox energy in a proton gradient. This is NAD(P)H-quinone oxidoreductase subunit 1 from Prochlorococcus marinus (strain MIT 9301).